Here is a 69-residue protein sequence, read N- to C-terminus: UPF0150 protein Ta0767 (69 aa).

Belongs to the UPF0150 family.

This Thermoplasma acidophilum (strain ATCC 25905 / DSM 1728 / JCM 9062 / NBRC 15155 / AMRC-C165) protein is UPF0150 protein Ta0767.